The following is a 147-amino-acid chain: Hemoglobin subunit beta (147 aa).

Residue Val-2 is modified to N-acetylvaline. The Globin domain maps to 3-147 (HLTGEEKGIV…VATALAHKYH (145 aa)). Thr-13 bears the Phosphothreonine mark. Ser-45 carries the post-translational modification Phosphoserine. Lys-60 is modified (N6-acetyllysine). His-64 provides a ligand contact to heme b. Lys-83 bears the N6-acetyllysine mark. His-93 contributes to the heme b binding site. At Cys-94 the chain carries S-nitrosocysteine. N6-acetyllysine is present on Lys-145.

It belongs to the globin family. Heterotetramer of two alpha chains and two beta chains. As to expression, red blood cells.

Involved in oxygen transport from the lung to the various peripheral tissues. This chain is Hemoglobin subunit beta (HBB), found in Rhinolophus ferrumequinum (Greater horseshoe bat).